A 702-amino-acid polypeptide reads, in one-letter code: Arylphorin (702 aa).

Positions 1–16 (MQTVLFLAALVSLAAA) are cleaved as a signal peptide. Residues Asn-211 and Asn-481 are each glycosylated (N-linked (GlcNAc...) asparagine).

Belongs to the hemocyanin family. Hemolymph.

The protein resides in the secreted. In terms of biological role, larval storage protein (LSP) which may serve as a store of amino acids for synthesis of adult proteins. Binds the A.niger cell wall component alpha-1,3-glucan, a fungal pathogen-associated molecular pattern (PAMP) that activates the host immune response. The polypeptide is Arylphorin (LOC113516268) (Galleria mellonella (Greater wax moth)).